The chain runs to 483 residues: MKVLIVSSELSPIAKEGGLGDAMAGLAPALDALGCEVKVAIPGYGHVLESCPGAELITENVRVSMGYFNMTADLRKVEPAPGVEAYMVCNESLFGRHGVYGDNDGLFMDNHKRYIFFSKSIPALCSASRYIPDVILANDWQTGLIPALMDQGHMPQTASVFVIHNIGYLGYVPPEDASMLGLSNTYLSYEGMEFYGQLSLLKAGIAYANKLVTVSPTYSREIQTTEQGAGLDGLMRKRSQDLAGILNGVDFQVWSPETDKHIPCNYSTADMAGKGKCKKALLDEMGMDSQLMNAPVAGMVTRLFSQKGIELVIGAVPEIVENGMGFILLGNGEESYVRDLRRLAQAYPGRFRFEEAFNEPLAHRIMAGADMLCVPSLYEPCGLTQMYALQYGTIPVARATGGLADTVRDIKAFAGKGNGFTFDAFSPGAFANAMDRAGRHYKNRKAWSALRTKAMASAGVFTWDMAAEQYYSIFERAVRARRL.

Residue Lys15 participates in ADP-alpha-D-glucose binding.

This sequence belongs to the glycosyltransferase 1 family. Bacterial/plant glycogen synthase subfamily.

The enzyme catalyses [(1-&gt;4)-alpha-D-glucosyl](n) + ADP-alpha-D-glucose = [(1-&gt;4)-alpha-D-glucosyl](n+1) + ADP + H(+). It participates in glycan biosynthesis; glycogen biosynthesis. Functionally, synthesizes alpha-1,4-glucan chains using ADP-glucose. The sequence is that of Glycogen synthase from Desulfatibacillum aliphaticivorans.